A 904-amino-acid chain; its full sequence is Protein translocase subunit SecA (904 aa).

Residues Q89, 107–111 (GEGKT), and D502 contribute to the ATP site. Residues 872–892 (VESDPTTWGEPSRNDPCPCGS) are disordered. 4 residues coordinate Zn(2+): C888, C890, C899, and H900.

Belongs to the SecA family. Part of the essential protein translocation apparatus which comprises SecA, SecYEG and auxiliary proteins SecDF-YajC and YidC. Homodimer. Requires Zn(2+) as cofactor.

The protein localises to the cell inner membrane. Its subcellular location is the cytoplasm. It catalyses the reaction ATP + H2O + cellular proteinSide 1 = ADP + phosphate + cellular proteinSide 2.. Functionally, part of the Sec protein translocase complex. Interacts with the SecYEG preprotein conducting channel. Has a central role in coupling the hydrolysis of ATP to the transfer of proteins into and across the cell membrane, serving both as a receptor for the preprotein-SecB complex and as an ATP-driven molecular motor driving the stepwise translocation of polypeptide chains across the membrane. The protein is Protein translocase subunit SecA of Rhodobacter capsulatus (Rhodopseudomonas capsulata).